A 955-amino-acid chain; its full sequence is Kinesin heavy chain isoform 5C (955 aa).

Positions 8–327 constitute a Kinesin motor domain; sequence SIKVMCRFRP…LMFGQRAKTI (320 aa). Residues Gln-87, Ser-89, Ser-90, Gly-91, Lys-92, Thr-93, His-94, and Lys-99 each contribute to the ATP site. Positions 174–315 are microtubule-binding; that stretch reads VSSPEEVMDV…PSVFNEAETK (142 aa). The stretch at 332–366 forms a coiled coil; the sequence is SVNLELTAEEWKKKYEKEKEKNKALKSVIQHLEVE. Residue Thr-403 is modified to Phosphothreonine. 2 coiled-coil regions span residues 413–538 and 590–913; these read KEKY…LQEL and ISKM…KNMA. The globular stretch occupies residues 859 to 955; the sequence is CELPKLEKRL…GSSNSTHYQK (97 aa). Residues 909–955 form a disordered region; that stretch reads AKNMARRAHSAQIAKPIRPGHYPASSPTAVHAVRGGGGSSNSTHYQK.

Belongs to the TRAFAC class myosin-kinesin ATPase superfamily. Kinesin family. Kinesin subfamily. Oligomer composed of two heavy chains and two light chains. Interacts with GRIP1. Interacts with TRAK1. Interacts with ZFYVE27. Interacts with KLC3.

It is found in the cytoplasm. Its subcellular location is the cytoskeleton. The protein resides in the cell projection. The protein localises to the dendrite. It carries out the reaction ATP + H2O = ADP + phosphate + H(+). Functionally, microtubule-associated force-producing protein that may play a role in organelle transport. Has ATPase activity. Involved in synaptic transmission. Mediates dendritic trafficking of mRNAs. Required for anterograde axonal transportation of MAPK8IP3/JIP3 which is essential for MAPK8IP3/JIP3 function in axon elongation. The sequence is that of Kinesin heavy chain isoform 5C (Kif5c) from Rattus norvegicus (Rat).